Consider the following 240-residue polypeptide: MNAEKSPVNHNVDHEEIAKFEAVASRWWDLEGEFKPLHRINPLRLGYIAERAGGLFGKKVLDVGCGGGILAESMAREGATVTGLDMGFEPLQVAKLHALESGIQVDYVQETVEEHAAKYAGQYDVVTCMEMLEHVPDPQSVVRACAQLVKPGGDVFFSTLNRNGKSWLMAVVGAEYILRMVPKGTHDVKKFIKPAELLGWVDQTSLKERHMTGLHYNPITNTFKLGPGVDVNYMLHTQNK.

S-adenosyl-L-methionine contacts are provided by Arg-44, Gly-64, Asp-85, and Met-129.

This sequence belongs to the methyltransferase superfamily. UbiG/COQ3 family.

The enzyme catalyses a 3-demethylubiquinol + S-adenosyl-L-methionine = a ubiquinol + S-adenosyl-L-homocysteine + H(+). It catalyses the reaction a 3-(all-trans-polyprenyl)benzene-1,2-diol + S-adenosyl-L-methionine = a 2-methoxy-6-(all-trans-polyprenyl)phenol + S-adenosyl-L-homocysteine + H(+). It participates in cofactor biosynthesis; ubiquinone biosynthesis. Its function is as follows. O-methyltransferase that catalyzes the 2 O-methylation steps in the ubiquinone biosynthetic pathway. The polypeptide is Ubiquinone biosynthesis O-methyltransferase (Escherichia coli O127:H6 (strain E2348/69 / EPEC)).